The following is a 291-amino-acid chain: Nucleotide-binding protein jk1004 (291 aa).

16–23 (GMSGAGRR) is a binding site for ATP. Residue 67–70 (DVRS) coordinates GTP.

The protein belongs to the RapZ-like family.

Displays ATPase and GTPase activities. The sequence is that of Nucleotide-binding protein jk1004 from Corynebacterium jeikeium (strain K411).